Here is a 100-residue protein sequence, read N- to C-terminus: Integration host factor subunit alpha (100 aa).

This sequence belongs to the bacterial histone-like protein family. In terms of assembly, heterodimer of an alpha and a beta chain.

Its function is as follows. This protein is one of the two subunits of integration host factor, a specific DNA-binding protein that functions in genetic recombination as well as in transcriptional and translational control. This chain is Integration host factor subunit alpha, found in Ruegeria sp. (strain TM1040) (Silicibacter sp.).